A 310-amino-acid polypeptide reads, in one-letter code: Elongation factor Ts (310 aa).

The tract at residues 80-83 (TDFV) is involved in Mg(2+) ion dislocation from EF-Tu.

This sequence belongs to the EF-Ts family.

It localises to the cytoplasm. Associates with the EF-Tu.GDP complex and induces the exchange of GDP to GTP. It remains bound to the aminoacyl-tRNA.EF-Tu.GTP complex up to the GTP hydrolysis stage on the ribosome. This Beijerinckia indica subsp. indica (strain ATCC 9039 / DSM 1715 / NCIMB 8712) protein is Elongation factor Ts.